The sequence spans 310 residues: Ribonuclease Z (310 aa).

Residues His-60, His-62, Asp-64, His-65, His-140, Asp-209, and His-269 each contribute to the Zn(2+) site. Asp-64 functions as the Proton acceptor in the catalytic mechanism.

This sequence belongs to the RNase Z family. Homodimer. Requires Zn(2+) as cofactor.

It catalyses the reaction Endonucleolytic cleavage of RNA, removing extra 3' nucleotides from tRNA precursor, generating 3' termini of tRNAs. A 3'-hydroxy group is left at the tRNA terminus and a 5'-phosphoryl group is left at the trailer molecule.. In terms of biological role, zinc phosphodiesterase, which displays some tRNA 3'-processing endonuclease activity. Probably involved in tRNA maturation, by removing a 3'-trailer from precursor tRNA. The polypeptide is Ribonuclease Z (Methanococcus maripaludis (strain C7 / ATCC BAA-1331)).